The following is a 785-amino-acid chain: Protein SEY1 (785 aa).

The disordered stretch occupies residues 1–31 (MASAAPINLRAQDTPYVPPTSLPTSSSQTGS). Residues 1-689 (MASAAPINLR…KRSTVASIAQ (689 aa)) lie on the Cytoplasmic side of the membrane. Positions 22–31 (LPTSSSQTGS) are enriched in low complexity. In terms of domain architecture, GB1/RHD3-type G spans 61-281 (GFSYNIVAVF…SSDYLFKPAY (221 aa)). Position 71 to 78 (71 to 78 (GSQSTGKS)) interacts with GTP. Residues 458–482 (SWEEELELLRDEIRAVADQCRKDET) are a coiled coil. The chain crosses the membrane as a helical span at residues 690-710 (IPYWIYGVLVVLGWNEAMLVL). Residues 711–713 (FNP) are Lumenal-facing. The chain crosses the membrane as a helical span at residues 714-734 (LYFAFLLLAMATSYIIAQLGL). The Cytoplasmic segment spans residues 735 to 785 (VGPLFQVTRTVGSEIQRQATARLREHFSQPVLAEPVQVGPSRDREEVGQIQ).

The protein belongs to the TRAFAC class dynamin-like GTPase superfamily. GB1/RHD3 GTPase family. RHD3 subfamily.

It localises to the endoplasmic reticulum membrane. Cooperates with the reticulon proteins and tubule-shaping DP1 family proteins to generate and maintain the structure of the tubular endoplasmic reticulum network. Has GTPase activity, which is required for its function in ER organization. The sequence is that of Protein SEY1 from Laccaria bicolor (strain S238N-H82 / ATCC MYA-4686) (Bicoloured deceiver).